The primary structure comprises 380 residues: Flap endonuclease 1 (380 aa).

Residues 1 to 104 (MGIQGLAKLI…GELAKRAERR (104 aa)) form an N-domain region. Position 34 (D34) interacts with Mg(2+). Residues R47 and R70 each coordinate DNA. Mg(2+) contacts are provided by D86, E158, E160, D179, and D181. The segment at 122–253 (DVNKFQKRLV…KRAIELIRQY (132 aa)) is I-domain. E158 contributes to the DNA binding site. Residues G231 and D233 each contribute to the DNA site. D233 lines the Mg(2+) pocket. The segment at 328–380 (LKNARHTSTQGRLDSFFKVMSSPSVKRKEPPKGAKGSASKKAKMSGGKFKKPK) is disordered. The segment at 336–344 (TQGRLDSFF) is interaction with PCNA. The segment covering 365 to 380 (ASKKAKMSGGKFKKPK) has biased composition (basic residues).

The protein belongs to the XPG/RAD2 endonuclease family. FEN1 subfamily. Interacts with PCNA. Three molecules of FEN1 bind to one PCNA trimer with each molecule binding to one PCNA monomer. PCNA stimulates the nuclease activity without altering cleavage specificity. The cofactor is Mg(2+). In terms of processing, phosphorylated. Phosphorylation upon DNA damage induces relocalization to the nuclear plasma.

Its subcellular location is the nucleus. It localises to the nucleolus. The protein resides in the nucleoplasm. The protein localises to the mitochondrion. Its function is as follows. Structure-specific nuclease with 5'-flap endonuclease and 5'-3' exonuclease activities involved in DNA replication and repair. During DNA replication, cleaves the 5'-overhanging flap structure that is generated by displacement synthesis when DNA polymerase encounters the 5'-end of a downstream Okazaki fragment. It enters the flap from the 5'-end and then tracks to cleave the flap base, leaving a nick for ligation. Also involved in the long patch base excision repair (LP-BER) pathway, by cleaving within the apurinic/apyrimidinic (AP) site-terminated flap. Acts as a genome stabilization factor that prevents flaps from equilibrating into structures that lead to duplications and deletions. Also possesses 5'-3' exonuclease activity on nicked or gapped double-stranded DNA, and exhibits RNase H activity. Also involved in replication and repair of rDNA and in repairing mitochondrial DNA. The protein is Flap endonuclease 1 of Branchiostoma floridae (Florida lancelet).